A 364-amino-acid chain; its full sequence is UDP-3-O-acylglucosamine N-acyltransferase (364 aa).

Catalysis depends on His-258, which acts as the Proton acceptor.

The protein belongs to the transferase hexapeptide repeat family. LpxD subfamily. In terms of assembly, homotrimer.

It catalyses the reaction a UDP-3-O-[(3R)-3-hydroxyacyl]-alpha-D-glucosamine + a (3R)-hydroxyacyl-[ACP] = a UDP-2-N,3-O-bis[(3R)-3-hydroxyacyl]-alpha-D-glucosamine + holo-[ACP] + H(+). Its pathway is bacterial outer membrane biogenesis; LPS lipid A biosynthesis. Functionally, catalyzes the N-acylation of UDP-3-O-acylglucosamine using 3-hydroxyacyl-ACP as the acyl donor. Is involved in the biosynthesis of lipid A, a phosphorylated glycolipid that anchors the lipopolysaccharide to the outer membrane of the cell. The protein is UDP-3-O-acylglucosamine N-acyltransferase of Burkholderia orbicola (strain AU 1054).